Reading from the N-terminus, the 509-residue chain is Maturase K (509 aa).

This sequence belongs to the intron maturase 2 family. MatK subfamily.

It is found in the plastid. The protein localises to the chloroplast. Usually encoded in the trnK tRNA gene intron. Probably assists in splicing its own and other chloroplast group II introns. The protein is Maturase K of Solanum tuberosum (Potato).